We begin with the raw amino-acid sequence, 102 residues long: NAD(P)H-quinone oxidoreductase subunit 4L (102 aa).

The next 3 membrane-spanning stretches (helical) occupy residues 4-24 (LQFFLVVAAILFCIGIYGLIV), 33-53 (MSIELMLNAVNLNFMAFSNFV), and 65-85 (VFVITVAAAEAAVGLAIVLGI).

This sequence belongs to the complex I subunit 4L family. In terms of assembly, NDH-1 can be composed of about 15 different subunits; different subcomplexes with different compositions have been identified which probably have different functions.

The protein localises to the cellular thylakoid membrane. It catalyses the reaction a plastoquinone + NADH + (n+1) H(+)(in) = a plastoquinol + NAD(+) + n H(+)(out). It carries out the reaction a plastoquinone + NADPH + (n+1) H(+)(in) = a plastoquinol + NADP(+) + n H(+)(out). In terms of biological role, NDH-1 shuttles electrons from an unknown electron donor, via FMN and iron-sulfur (Fe-S) centers, to quinones in the respiratory and/or the photosynthetic chain. The immediate electron acceptor for the enzyme in this species is believed to be plastoquinone. Couples the redox reaction to proton translocation, and thus conserves the redox energy in a proton gradient. Cyanobacterial NDH-1 also plays a role in inorganic carbon-concentration. This Synechococcus sp. (strain JA-3-3Ab) (Cyanobacteria bacterium Yellowstone A-Prime) protein is NAD(P)H-quinone oxidoreductase subunit 4L.